The primary structure comprises 494 residues: 3-octaprenyl-4-hydroxybenzoate carboxy-lyase (494 aa).

Asn-172 contacts Mn(2+). Prenylated FMN is bound by residues 175–177 (IYR), 189–191 (RWL), and 194–195 (RG). Glu-238 contacts Mn(2+). Asp-294 functions as the Proton donor in the catalytic mechanism.

This sequence belongs to the UbiD family. As to quaternary structure, homohexamer. The cofactor is prenylated FMN. It depends on Mn(2+) as a cofactor.

It localises to the cell membrane. The enzyme catalyses a 4-hydroxy-3-(all-trans-polyprenyl)benzoate + H(+) = a 2-(all-trans-polyprenyl)phenol + CO2. Its pathway is cofactor biosynthesis; ubiquinone biosynthesis. In terms of biological role, catalyzes the decarboxylation of 3-octaprenyl-4-hydroxy benzoate to 2-octaprenylphenol, an intermediate step in ubiquinone biosynthesis. In Herminiimonas arsenicoxydans, this protein is 3-octaprenyl-4-hydroxybenzoate carboxy-lyase.